Reading from the N-terminus, the 281-residue chain is Undecaprenyl-diphosphatase (281 aa).

A run of 6 helical transmembrane segments spans residues 90-110 (WLVT…QDSI), 113-133 (VLRG…VLGA), 147-167 (LSWK…IPGV), 191-211 (SFLL…YDEL), 217-237 (IAWV…YAVI), and 257-277 (IAAA…AFQG).

Belongs to the UppP family.

Its subcellular location is the cell membrane. The enzyme catalyses di-trans,octa-cis-undecaprenyl diphosphate + H2O = di-trans,octa-cis-undecaprenyl phosphate + phosphate + H(+). Catalyzes the dephosphorylation of undecaprenyl diphosphate (UPP). Confers resistance to bacitracin. In Kineococcus radiotolerans (strain ATCC BAA-149 / DSM 14245 / SRS30216), this protein is Undecaprenyl-diphosphatase.